We begin with the raw amino-acid sequence, 203 residues long: Proteasome subunit beta 1 (203 aa).

The propeptide at 1 to 7 (MAEKLKG) is removed in mature form; by autocatalysis. The active-site Nucleophile is the T8.

The protein belongs to the peptidase T1B family. In terms of assembly, the 20S proteasome core is composed of 14 alpha and 14 beta subunits that assemble into four stacked heptameric rings, resulting in a barrel-shaped structure. The two inner rings, each composed of seven catalytic beta subunits, are sandwiched by two outer rings, each composed of seven alpha subunits. The catalytic chamber with the active sites is on the inside of the barrel. Has a gated structure, the ends of the cylinder being occluded by the N-termini of the alpha-subunits. Is capped at one or both ends by the proteasome regulatory ATPase, PAN.

Its subcellular location is the cytoplasm. It carries out the reaction Cleavage of peptide bonds with very broad specificity.. Its activity is regulated as follows. The formation of the proteasomal ATPase PAN-20S proteasome complex, via the docking of the C-termini of PAN into the intersubunit pockets in the alpha-rings, triggers opening of the gate for substrate entry. Interconversion between the open-gate and close-gate conformations leads to a dynamic regulation of the 20S proteasome proteolysis activity. Component of the proteasome core, a large protease complex with broad specificity involved in protein degradation. The protein is Proteasome subunit beta 1 of Thermococcus onnurineus (strain NA1).